Reading from the N-terminus, the 100-residue chain is Small ribosomal subunit protein uS14c (100 aa).

It belongs to the universal ribosomal protein uS14 family. In terms of assembly, part of the 30S ribosomal subunit.

Its subcellular location is the plastid. It localises to the chloroplast. Binds 16S rRNA, required for the assembly of 30S particles. In Olimarabidopsis pumila (Dwarf rocket), this protein is Small ribosomal subunit protein uS14c.